We begin with the raw amino-acid sequence, 86 residues long: Small ribosomal subunit protein uS17 (86 aa).

This sequence belongs to the universal ribosomal protein uS17 family. Part of the 30S ribosomal subunit.

In terms of biological role, one of the primary rRNA binding proteins, it binds specifically to the 5'-end of 16S ribosomal RNA. The chain is Small ribosomal subunit protein uS17 from Streptococcus equi subsp. equi (strain 4047).